A 566-amino-acid chain; its full sequence is KsdD-like steroid dehydrogenase Rv0785 (566 aa).

23–54 (DAIVVGAGLAGLVAACELADRGLRVLILDQEN) serves as a coordination point for FAD.

This sequence belongs to the FAD-dependent oxidoreductase 2 family. It depends on FAD as a cofactor.

It participates in lipid metabolism; steroid biosynthesis. Its function is as follows. Able to catalyze the elimination of the C-1 and C-2 hydrogen atoms of the A-ring from the polycyclic ring structure of 3-ketosteroids. The protein is KsdD-like steroid dehydrogenase Rv0785 of Mycobacterium tuberculosis (strain ATCC 25618 / H37Rv).